The following is a 212-amino-acid chain: Lysozyme g-like protein 2 (212 aa).

An N-terminal signal peptide occupies residues 1–19 (MLSSVVFWGLIALIGTSRG). Disulfide bonds link Cys39–Cys92 and Cys53–Cys61. Residue Glu105 is part of the active site.

Belongs to the glycosyl hydrolase 23 family. Strong expression detected in the eye and weak expression in the testis. No expression is observed in any other tissues.

Its subcellular location is the secreted. Its function is as follows. May act as a potent antibacterial protein that may play a role in the innate immunity. The protein is Lysozyme g-like protein 2 (LYG2) of Homo sapiens (Human).